Here is a 211-residue protein sequence, read N- to C-terminus: CASP-like protein 3A1 (211 aa).

Residues 1–45 lie on the Cytoplasmic side of the membrane; it reads MGSIGNGRSDSVVGIQMPPAGSKMVLEPEALQVTTSPVPRWPRLG. A helical membrane pass occupies residues 46–66; the sequence is VVMVATRAVAMVMALLSMSLM. The Extracellular segment spans residues 67-95; that stretch reads VSSKQRGILTIFGIEIPLDANWSFSYSLQ. N-linked (GlcNAc...) asparagine glycosylation occurs at Asn87. Residues 96–116 form a helical membrane-spanning segment; the sequence is FLVAMSTASAAYSLAQLLLIA. At 117-131 the chain is on the cytoplasmic side; that stretch reads HKAVKKSPIVPSRRH. A helical membrane pass occupies residues 132-152; the sequence is AWLLFAGDQVFSLAMMSAGSA. The Extracellular segment spans residues 153–186; sequence AAAVANLNRTGIRHTALPNFCKPLPRFCDLSAVS. N-linked (GlcNAc...) asparagine glycosylation occurs at Asn160. Residues 187 to 207 traverse the membrane as a helical segment; that stretch reads IACAFLSCVFLAASAVIDVIW. At 208–211 the chain is on the cytoplasmic side; it reads LSSP.

It belongs to the Casparian strip membrane proteins (CASP) family. In terms of assembly, homodimer and heterodimers.

It localises to the cell membrane. The chain is CASP-like protein 3A1 from Sorghum bicolor (Sorghum).